The following is a 235-amino-acid chain: Small ribosomal subunit protein uS2 (235 aa).

It belongs to the universal ribosomal protein uS2 family.

The sequence is that of Small ribosomal subunit protein uS2 from Thermoanaerobacter sp. (strain X514).